Consider the following 312-residue polypeptide: Light-independent protochlorophyllide reductase iron-sulfur ATP-binding protein (312 aa).

ATP is bound by residues 55 to 60 (GIGKST) and K84. Residue S59 participates in Mg(2+) binding. [4Fe-4S] cluster-binding residues include C140 and C174. Residues 225–226 (NR) and 249–251 (PDL) contribute to the ATP site.

The protein belongs to the NifH/BchL/ChlL family. As to quaternary structure, homodimer. Protochlorophyllide reductase is composed of three subunits; BchL, BchN and BchB. [4Fe-4S] cluster serves as cofactor.

It catalyses the reaction chlorophyllide a + oxidized 2[4Fe-4S]-[ferredoxin] + 2 ADP + 2 phosphate = protochlorophyllide a + reduced 2[4Fe-4S]-[ferredoxin] + 2 ATP + 2 H2O. It functions in the pathway porphyrin-containing compound metabolism; bacteriochlorophyll biosynthesis (light-independent). Component of the dark-operative protochlorophyllide reductase (DPOR) that uses Mg-ATP and reduced ferredoxin to reduce ring D of protochlorophyllide (Pchlide) to form chlorophyllide a (Chlide). This reaction is light-independent. The L component serves as a unique electron donor to the NB-component of the complex, and binds Mg-ATP. The protein is Light-independent protochlorophyllide reductase iron-sulfur ATP-binding protein of Rhodopseudomonas palustris (strain ATCC BAA-98 / CGA009).